Consider the following 244-residue polypeptide: ATP synthase subunit b 2 (244 aa).

A helical transmembrane segment spans residues 2–22; it reads TVDWWTIGLQVINVSVLIWLL.

The protein belongs to the ATPase B chain family. As to quaternary structure, F-type ATPases have 2 components, F(1) - the catalytic core - and F(0) - the membrane proton channel. F(1) has five subunits: alpha(3), beta(3), gamma(1), delta(1), epsilon(1). F(0) has three main subunits: a(1), b(2) and c(10-14). The alpha and beta chains form an alternating ring which encloses part of the gamma chain. F(1) is attached to F(0) by a central stalk formed by the gamma and epsilon chains, while a peripheral stalk is formed by the delta and b chains.

Its subcellular location is the cell inner membrane. F(1)F(0) ATP synthase produces ATP from ADP in the presence of a proton or sodium gradient. F-type ATPases consist of two structural domains, F(1) containing the extramembraneous catalytic core and F(0) containing the membrane proton channel, linked together by a central stalk and a peripheral stalk. During catalysis, ATP synthesis in the catalytic domain of F(1) is coupled via a rotary mechanism of the central stalk subunits to proton translocation. Its function is as follows. Component of the F(0) channel, it forms part of the peripheral stalk, linking F(1) to F(0). The sequence is that of ATP synthase subunit b 2 from Gluconobacter oxydans (strain 621H) (Gluconobacter suboxydans).